The chain runs to 459 residues: Argininosuccinate lyase (459 aa).

It belongs to the lyase 1 family. Argininosuccinate lyase subfamily.

It is found in the cytoplasm. It catalyses the reaction 2-(N(omega)-L-arginino)succinate = fumarate + L-arginine. It participates in amino-acid biosynthesis; L-arginine biosynthesis; L-arginine from L-ornithine and carbamoyl phosphate: step 3/3. The polypeptide is Argininosuccinate lyase (Lactococcus lactis subsp. cremoris (strain MG1363)).